The primary structure comprises 152 residues: Deoxyuridine 5'-triphosphate nucleotidohydrolase (152 aa).

Substrate-binding positions include 71–73, Asn-84, 88–90, and Met-98; these read RSG and LID.

Belongs to the dUTPase family. Requires Mg(2+) as cofactor.

The enzyme catalyses dUTP + H2O = dUMP + diphosphate + H(+). The protein operates within pyrimidine metabolism; dUMP biosynthesis; dUMP from dCTP (dUTP route): step 2/2. Its function is as follows. This enzyme is involved in nucleotide metabolism: it produces dUMP, the immediate precursor of thymidine nucleotides and it decreases the intracellular concentration of dUTP so that uracil cannot be incorporated into DNA. This chain is Deoxyuridine 5'-triphosphate nucleotidohydrolase, found in Haemophilus ducreyi (strain 35000HP / ATCC 700724).